Consider the following 445-residue polypeptide: 8-amino-7-oxononanoate synthase (445 aa).

Position 40 (R40) interacts with substrate. Pyridoxal 5'-phosphate is bound at residue 131-132 (GY). H156 contacts substrate. Pyridoxal 5'-phosphate is bound by residues S202, H230, and T258. K261 is subject to N6-(pyridoxal phosphate)lysine. T377 lines the substrate pocket. Residues 408 to 445 (ASEGQTRRDAEQPPRSLRSLPPEGAAASLGAARRETAA) form a disordered region.

The protein belongs to the class-II pyridoxal-phosphate-dependent aminotransferase family. BioF subfamily. As to quaternary structure, homodimer. It depends on pyridoxal 5'-phosphate as a cofactor.

The catalysed reaction is 6-carboxyhexanoyl-[ACP] + L-alanine + H(+) = (8S)-8-amino-7-oxononanoate + holo-[ACP] + CO2. Its pathway is cofactor biosynthesis; biotin biosynthesis. In terms of biological role, catalyzes the decarboxylative condensation of pimeloyl-[acyl-carrier protein] and L-alanine to produce 8-amino-7-oxononanoate (AON), [acyl-carrier protein], and carbon dioxide. In Burkholderia ambifaria (strain MC40-6), this protein is 8-amino-7-oxononanoate synthase.